Reading from the N-terminus, the 588-residue chain is DNA mismatch repair protein MutL (588 aa).

This sequence belongs to the DNA mismatch repair MutL/HexB family.

In terms of biological role, this protein is involved in the repair of mismatches in DNA. It is required for dam-dependent methyl-directed DNA mismatch repair. May act as a 'molecular matchmaker', a protein that promotes the formation of a stable complex between two or more DNA-binding proteins in an ATP-dependent manner without itself being part of a final effector complex. This is DNA mismatch repair protein MutL from Fervidobacterium nodosum (strain ATCC 35602 / DSM 5306 / Rt17-B1).